A 4561-amino-acid polypeptide reads, in one-letter code: StAR-related lipid transfer protein 9 (4561 aa).

Positions 3 to 384 (NVQVAVRVRP…MRYASNAKNI (382 aa)) constitute a Kinesin motor domain. Position 103–110 (103–110 (GQTGSGKT)) interacts with ATP. Residues 307 to 321 (SSGGDSGVPSTTSGA) show a composition bias toward low complexity. Positions 307-330 (SSGGDSGVPSTTSGASSGGGPARR) are disordered. An FHA domain is found at 482-533 (TKIGRIDSDQEQDIVLQGQWIERDHCTITSTCGVVILRPTQGARCTVNGREV). Disordered stretches follow at residues 784–805 (SRAPSWASSSNTSGPGSQRRSR), 873–1064 (SRWR…DTES), and 1092–1153 (WNLP…PSDS). Composition is skewed to polar residues over residues 789–805 (WASSSNTSGPGSQRRSR), 884–903 (ASTQGTHLTVSHKSVSSQEI), 911–920 (CQMSSQGQST), and 939–948 (RWASVNTKTG). Basic and acidic residues-rich tracts occupy residues 1046-1060 (RPIKDPVREEDRDLS) and 1124-1135 (SRGEYSMKDHGH). Serine 1164 is modified (phosphoserine). Disordered stretches follow at residues 1288–1392 (PSGD…SDMS), 1700–1767 (REAW…EEEN), 1959–1980 (ECKAHGQSQEVQSKEEPLEEKQ), 2077–2120 (TNAT…ADRL), 2320–2356 (LATGVGDQDHSGETRSSSPQERASGDVSTTHTPLGGS), 2384–2427 (VSTS…SSLD), 2439–2467 (FLLQEDSNQGEEERQKAEETSEDQQLPNS), 2622–2656 (KPRQFCGASGRSDSSEVIEKRKEASRTKSSVDPLP), 2712–2735 (KDSILGHQEPRSLDSTHGGGSEKI), 2777–2800 (TGLEETKASPKSGAVHPEAPGNVG), 3002–3067 (RSVE…PGTL), 3185–3207 (AQTEPSQPAAQTHSQHCSDREQL), 3246–3286 (ELNL…TSLK), 3645–3703 (EGAA…LRPE), 3790–3847 (SDLA…PQQS), and 3863–3913 (QPKT…GRTT). Over residues 1300 to 1321 (DIHEIQPHDEKPKHWLSIEEPK) the composition is skewed to basic and acidic residues. 2 stretches are compositionally biased toward polar residues: residues 1328-1360 (LPQSSTEPPCSSDLYATSASDTSKPSVCESQGL) and 1722-1741 (PKLSQSQNSKIDSPQQTTTK). Composition is skewed to basic and acidic residues over residues 1754-1767 (ELGKHSRNMREEEN) and 1970-1980 (QSKEEPLEEKQ). Residues 2077–2091 (TNATSNNNTQIQKLT) show a composition bias toward polar residues. A compositionally biased stretch (basic and acidic residues) spans 2096-2110 (RSREYVQTRESESEH). 2 stretches are compositionally biased toward polar residues: residues 2333–2351 (TRSSSPQERASGDVSTTHT) and 2399–2408 (TSTGSTTQEA). Residues 2414–2463 (EATVQKERKNSSLDRISRQAEKRVSFLLQEDSNQGEEERQKAEETSEDQQ) adopt a coiled-coil conformation. The span at 2417–2427 (VQKERKNSSLD) shows a compositional bias: basic and acidic residues. Positions 2634–2647 (DSSEVIEKRKEASR) are enriched in basic and acidic residues. 2 stretches are compositionally biased toward polar residues: residues 3039-3054 (LKNNSVDENGQASQTM) and 3187-3199 (TEPSQPAAQTHSQ). A compositionally biased stretch (pro residues) spans 3689–3700 (PASPDGSPPPSL). Basic and acidic residues predominate over residues 3812–3835 (DSQRAESLDREGKSPLGKSSERLL). The span at 3863-3874 (QPKTTTGDQSKL) shows a compositional bias: polar residues. Residues 4185–4224 (SDIELMLQEYRRAREEAKVEIAQARDRLKERTEQEKMRIR) are a coiled coil. In terms of domain architecture, START spans 4344–4561 (PYQDLAKHIV…VAKLASFLRS (218 aa)).

This sequence belongs to the TRAFAC class myosin-kinesin ATPase superfamily. Kinesin family. In terms of assembly, interacts with ATAD3A.

It is found in the cytoplasm. Its subcellular location is the cytoskeleton. The protein resides in the microtubule organizing center. It localises to the centrosome. The protein localises to the centriole. It is found in the nucleus. Its function is as follows. Microtubule-dependent motor protein required for spindle pole assembly during mitosis. Required to stabilize the pericentriolar material (PCM). The polypeptide is StAR-related lipid transfer protein 9 (Stard9) (Mus musculus (Mouse)).